A 347-amino-acid chain; its full sequence is L-Ala-D/L-amino acid epimerase (347 aa).

156 to 158 (KLK) provides a ligand contact to substrate. Mg(2+) contacts are provided by D183, E211, and D237. Substrate contacts are provided by residues K259 and 309–311 (DID).

This sequence belongs to the mandelate racemase/muconate lactonizing enzyme family. Mg(2+) is required as a cofactor.

Its function is as follows. Dipeptide epimerase with a broad substrate specificity. Catalyzes the epimerization of L-Ala-L-Ala, L-Ala-L-Ser, L-Ala-L-Thr, L-Ala-L-Met, L-Ala-L-Phe, L-Ala-L-Tyr, L-Gly-L-Asp, L-Val-L-Asp, L-Val-L-Glu and L-Val-L-Phe (in vitro). Can also catalyze the epimerization of L-Ala-L-Glu, but with lower efficiency. This chain is L-Ala-D/L-amino acid epimerase, found in Pedosphaera parvula (strain Ellin514).